Here is a 300-residue protein sequence, read N- to C-terminus: uncharacterized protein (300 aa).

3 Solcar repeats span residues 10–101, 119–199, and 212–294; these read ESQT…VKDF, GKAI…AKEY, and FQNF…LIPF. 6 consecutive transmembrane segments (helical) span residues 16 to 36, 70 to 86, 121 to 141, 178 to 198, 215 to 235, and 275 to 295; these read IVGS…VDTI, ATSL…YKIV, AIMH…LLPL, TAAR…FAKE, FFTS…LDVI, and LTTG…IPFF.

Belongs to the mitochondrial carrier (TC 2.A.29) family.

The protein localises to the mitochondrion inner membrane. This is an uncharacterized protein from Schizosaccharomyces pombe (strain 972 / ATCC 24843) (Fission yeast).